The following is a 595-amino-acid chain: D-xylonate dehydratase (595 aa).

Cysteine 64 contributes to the [2Fe-2S] cluster binding site. Glutamate 96 lines the Mg(2+) pocket. [2Fe-2S] cluster is bound at residue cysteine 132. Mg(2+) is bound at residue aspartate 133. Cysteine 205 is a [2Fe-2S] cluster binding site. Glutamate 467 serves as a coordination point for Mg(2+).

This sequence belongs to the IlvD/Edd family. In terms of assembly, homotetramer. The cofactor is [2Fe-2S] cluster. Requires Mg(2+) as cofactor.

The enzyme catalyses D-xylonate = 2-dehydro-3-deoxy-D-arabinonate + H2O. It catalyses the reaction D-gluconate = 2-dehydro-3-deoxy-D-gluconate + H2O. It functions in the pathway carbohydrate metabolism; D-xylose degradation. Its function is as follows. Catalyzes the dehydration of D-xylonate to 2-dehydro-3-deoxy-D-arabinonate during D-xylose degradation. Can also dehydrate D-gluconate, with similar catalytic efficiency. Has weak activity with D-galactonate, D-fuconate and L-arabinonate. This Caulobacter vibrioides (strain ATCC 19089 / CIP 103742 / CB 15) (Caulobacter crescentus) protein is D-xylonate dehydratase.